The sequence spans 669 residues: Acyl-coenzyme A oxidase 1 (669 aa).

Residues Thr152 and Gly191 each coordinate FAD. Glu434 acts as the Proton acceptor in catalysis. At Tyr544 the chain carries Phosphotyrosine. Position 551 is a phosphoserine (Ser551). The Microbody targeting signal signature appears at 667 to 669 (AHL).

This sequence belongs to the acyl-CoA oxidase family. In terms of assembly, homodimer. It depends on FAD as a cofactor. In terms of tissue distribution, expressed in glia.

It is found in the peroxisome. The protein localises to the nucleus. The catalysed reaction is a 2,3-saturated acyl-CoA + O2 = a (2E)-enoyl-CoA + H2O2. It functions in the pathway lipid metabolism; peroxisomal fatty acid beta-oxidation. Catalyzes the desaturation of acyl-CoAs to 2-trans-enoyl-CoAs. First enzyme of the fatty acid beta-oxidation pathway. This chain is Acyl-coenzyme A oxidase 1, found in Drosophila melanogaster (Fruit fly).